We begin with the raw amino-acid sequence, 683 residues long: Heat shock protein homolog ECU03_0520 (683 aa).

Belongs to the heat shock protein 70 family.

It is found in the cytoplasm. This is Heat shock protein homolog ECU03_0520 from Encephalitozoon cuniculi (strain GB-M1) (Microsporidian parasite).